Here is a 1172-residue protein sequence, read N- to C-terminus: Structural maintenance of chromosomes protein 2 (1172 aa).

32 to 39 (GLNGSGKS) provides a ligand contact to ATP. Coiled-coil stretches lie at residues 172 to 204 (RMFE…EEIE) and 258 to 507 (SHIA…AYME). The 121-residue stretch at 520–640 (SKVKGLVAQL…CDTPESAKKV (121 aa)) folds into the SMC hinge domain. The stretch at 676–941 (LLQIQKLNSL…INHLEKENDW (266 aa)) forms a coiled coil.

The protein belongs to the SMC family. SMC2 subfamily. As to quaternary structure, forms a heterodimer with cut3/smc4. Component of the condensin complex, which contains the cut3 and cut14 heterodimer, and three non smc subunits that probably regulate the complex: cnd1, cnd2 and cnd3.

The protein localises to the nucleus. It is found in the cytoplasm. The protein resides in the chromosome. Functionally, central component of the condensin complex, a complex required for conversion of interphase chromatin into mitotic-like condense chromosomes. The condensin complex probably introduces positive supercoils into relaxed DNA in the presence of type I topoisomerases and converts nicked DNA into positive knotted forms in the presence of type II topoisomerases. The sequence is that of Structural maintenance of chromosomes protein 2 (cut14) from Schizosaccharomyces pombe (strain 972 / ATCC 24843) (Fission yeast).